The following is a 408-amino-acid chain: KGGKTQGRSAKSSRPEFDWRDPLVLEEQLTADEILIRDTFRTYCQEHLMPRIVLANRNEVFHREIISEMGELGVLGPTIKGYGCAGVSSVAYGLLARELERVDSGYRSAMSVQSSLVMHPIYAYGSEEQQQQKYLPRLAKGELLGCFGLTEPNHGSDPGSMETRALHNPSNRSYTLNGAKTWITNSPVADLFVVWARCEDNCIRGFLLEKGMRGLSAPKIEGKFSLRASATGMIIMDDVEVPEENVLPKASSLAVPFGCLNNARYGISWGVLGAAEFCLHTARQYTLDRIQFGVPLAKNQLIQRKLADMLTEITLGLHACLQLGRLKDQDKVTPEMVSLLKRNNCGKALDIARQARDMLGGNGISDEYHVIRHAMNLEAVNTYEGTHDIHALILGRAITGIQAFTTDK.

Residues 1–13 (KGGKTQGRSAKSS) constitute a mitochondrion transit peptide. Residues 107–108 (RS) and Ser-156 each bind substrate. FAD-binding positions include 147–156 (FGLTEPNHGS), Ser-156, and 182–184 (WIT). Residue Lys-210 is modified to N6-acetyllysine. 257–264 (FGCLNNAR) is a binding site for substrate. FAD-binding positions include Arg-289, Gln-300, and 357 to 361 (DMLGG). The Proton acceptor role is filled by Glu-384. Residue Gly-385 participates in substrate binding. Residues Thr-386, 386–388 (THD), and Phe-404 contribute to the FAD site.

Belongs to the acyl-CoA dehydrogenase family. As to quaternary structure, homotetramer. FAD serves as cofactor.

The protein localises to the mitochondrion matrix. The catalysed reaction is glutaryl-CoA + oxidized [electron-transfer flavoprotein] + 2 H(+) = (2E)-butenoyl-CoA + reduced [electron-transfer flavoprotein] + CO2. Its pathway is amino-acid metabolism; lysine degradation. It functions in the pathway amino-acid metabolism; tryptophan metabolism. Catalyzes the oxidative decarboxylation of glutaryl-CoA to crotonyl-CoA and CO(2) in the degradative pathway of L-lysine, L-hydroxylysine, and L-tryptophan metabolism. It uses electron transfer flavoprotein as its electron acceptor. The chain is Glutaryl-CoA dehydrogenase, mitochondrial (GCDH) from Sus scrofa (Pig).